Reading from the N-terminus, the 975-residue chain is Nesprin-3 (975 aa).

Topologically, residues 1 to 925 are cytoplasmic; it reads MTQQPQEDFE…PCSLLQKACR (925 aa). Spectrin repeat units follow at residues 220-325 and 647-740; these read QDHE…RLRG and REHC…QALR. The tract at residues 778 to 798 is disordered; that stretch reads LINPQDPIPRRQHGANPLEGH. Residues 917–975 form the KASH domain; that stretch reads CSLLQKACRVALPLQLLLLLFLLLLFLLPAGEEERSCALANNFARSFALMLRYNGPPPT. The chain crosses the membrane as a helical; Anchor for type IV membrane protein span at residues 926–946; sequence VALPLQLLLLLFLLLLFLLPA. At 947-975 the chain is on the perinuclear space side; the sequence is GEEERSCALANNFARSFALMLRYNGPPPT.

This sequence belongs to the nesprin family. As to quaternary structure, core component of LINC complexes which are composed of inner nuclear membrane SUN domain-containing proteins coupled to outer nuclear membrane KASH domain-containing nesprins. SUN and KASH domain-containing proteins seem to bind each other promiscuously; however, differentially expression of LINC complex constituents can give rise to specific assemblies. Interacts with SUN1 and SUN2; probably forming respective LINC complexes. Interacts with PLEC (via actin-binding domain). Interacts with DST. Interacts with SYNE1. Interacts (via KASH domain) with TOR1A (ATP-bound); the interaction is required for SYNE3 nuclear envelope localization. Post-translationally, the disulfid bond with SUN1 or SUN2 is required for stability of the respective LINC complex under tensile forces. As to expression, ubiquitous.

The protein localises to the nucleus outer membrane. The protein resides in the nucleus envelope. It localises to the rough endoplasmic reticulum. Its function is as follows. As a component of the LINC (LInker of Nucleoskeleton and Cytoskeleton) complex involved in the connection between the nuclear lamina and the cytoskeleton. The nucleocytoplasmic interactions established by the LINC complex play an important role in the transmission of mechanical forces across the nuclear envelope and in nuclear movement and positioning. Probable anchoring protein which tethers the nucleus to the cytoskeleton by binding PLEC which can associate with the intermediate filament system. Plays a role in the regulation of aortic epithelial cell morphology, and is required for flow-induced centrosome polarization and directional migration in aortic endothelial cells. This is Nesprin-3 (Syne3) from Mus musculus (Mouse).